A 420-amino-acid polypeptide reads, in one-letter code: Signal recognition particle receptor FtsY (420 aa).

The segment covering 28-62 (DLDRAMGKVAPDNKKTRDAKAAADARLAAEAEEAK) has biased composition (basic and acidic residues). Residues 28–118 (DLDRAMGKVA…PETPESVGSR (91 aa)) form a disordered region. Positions 63-104 (AATAAEPAKSAESAKAEPAPAAQAEPEPAAAPKPESQPASKP) are enriched in low complexity. GTP-binding positions include 227–234 (GVNGTGKT), 310–314 (DTAGR), and 372–375 (SKLD).

The protein belongs to the GTP-binding SRP family. FtsY subfamily. As to quaternary structure, part of the signal recognition particle protein translocation system, which is composed of SRP and FtsY.

Its subcellular location is the cell membrane. The protein resides in the cytoplasm. It carries out the reaction GTP + H2O = GDP + phosphate + H(+). Its function is as follows. Involved in targeting and insertion of nascent membrane proteins into the cytoplasmic membrane. Acts as a receptor for the complex formed by the signal recognition particle (SRP) and the ribosome-nascent chain (RNC). In Bifidobacterium longum (strain NCC 2705), this protein is Signal recognition particle receptor FtsY.